We begin with the raw amino-acid sequence, 1654 residues long: Outer membrane protein B (1654 aa).

The propeptide occupies 1334–1361 (GALRYLGTPETAEMAGPEAGAISAAVAA). The Autotransporter domain occupies 1366 to 1654 (IDNVAYGIWA…QGTLKVRVNF (289 aa)).

The protein belongs to the rickettsiae OmpA/OmpB family. Post-translationally, the N-terminus is blocked.

It is found in the periplasm. The protein resides in the secreted. The protein localises to the cell surface. It localises to the cell outer membrane. The 120 kDa surface-exposed protein is a major structural protein which may play a role as a rickettsial virulence factor and/or immunogen during infection. In terms of biological role, the 32 kDa beta peptide may serve as a membrane anchor. The protein is Outer membrane protein B (ompB) of Rickettsia rickettsii.